Here is a 162-residue protein sequence, read N- to C-terminus: UPF0460 protein y4xD (162 aa).

Belongs to the UPF0460 family.

This Sinorhizobium fredii (strain NBRC 101917 / NGR234) protein is UPF0460 protein y4xD.